A 384-amino-acid chain; its full sequence is Histidinol-phosphate aminotransferase 1 (384 aa).

Lys-233 carries the post-translational modification N6-(pyridoxal phosphate)lysine.

It belongs to the class-II pyridoxal-phosphate-dependent aminotransferase family. Histidinol-phosphate aminotransferase subfamily. As to quaternary structure, homodimer. Pyridoxal 5'-phosphate serves as cofactor.

It catalyses the reaction L-histidinol phosphate + 2-oxoglutarate = 3-(imidazol-4-yl)-2-oxopropyl phosphate + L-glutamate. Its pathway is amino-acid biosynthesis; L-histidine biosynthesis; L-histidine from 5-phospho-alpha-D-ribose 1-diphosphate: step 7/9. In Thiobacillus denitrificans (strain ATCC 25259 / T1), this protein is Histidinol-phosphate aminotransferase 1.